The primary structure comprises 877 residues: ABC transporter A family member 1 (877 aa).

A run of 7 helical transmembrane segments spans residues 46–66 (YFST…LFLI), 268–288 (VWGG…LLYK), 324–344 (ILIS…FFLG), 347–367 (FFVL…VAFF), 379–399 (IGIG…FSGM), 420–440 (IILF…IGNV), and 479–499 (LLAL…IIPG). The ABC transporter domain maps to 552-788 (LIICGLSKSY…YGEGYSVNIV (237 aa)). 591–598 (GSNGCGKS) is an ATP binding site.

Belongs to the ABC transporter superfamily. ABCA family.

The protein resides in the membrane. This is ABC transporter A family member 1 (abcA1) from Dictyostelium discoideum (Social amoeba).